The chain runs to 181 residues: GTP cyclohydrolase 1 2 (181 aa).

Belongs to the GTP cyclohydrolase I family. Homomer.

The catalysed reaction is GTP + H2O = 7,8-dihydroneopterin 3'-triphosphate + formate + H(+). Its pathway is cofactor biosynthesis; 7,8-dihydroneopterin triphosphate biosynthesis; 7,8-dihydroneopterin triphosphate from GTP: step 1/1. The polypeptide is GTP cyclohydrolase 1 2 (folE2) (Pseudomonas aeruginosa (strain ATCC 15692 / DSM 22644 / CIP 104116 / JCM 14847 / LMG 12228 / 1C / PRS 101 / PAO1)).